Consider the following 213-residue polypeptide: Bacteriochlorophyll synthase 23 kDa chain (213 aa).

The protein operates within porphyrin-containing compound metabolism; bacteriochlorophyll biosynthesis (light-independent). This Rhodobacter capsulatus (strain ATCC BAA-309 / NBRC 16581 / SB1003) protein is Bacteriochlorophyll synthase 23 kDa chain (bchJ).